The chain runs to 189 residues: uncharacterized protein (189 aa).

5 consecutive transmembrane segments (helical) span residues 4–21, 34–56, 79–101, 122–144, and 148–170; these read AIST…FLFR, AFYP…PLIL, LLVI…LIYS, RILS…VLLN, and ILHV…NLLV.

The protein resides in the cell membrane. This is an uncharacterized protein from Archaeoglobus fulgidus (strain ATCC 49558 / DSM 4304 / JCM 9628 / NBRC 100126 / VC-16).